Reading from the N-terminus, the 818-residue chain is Mediator of RNA polymerase II transcription subunit 16 (818 aa).

WD repeat units lie at residues 86-125 (SSKSLISVLQWSPNGEQLLLGYVGGRVEIWQPRNQSINLW), 296-342 (LDGR…QSVH), and 615-666 (RLPE…PVYT). The tract at residues 175-524 (TLSGFGGVAS…ANFLALKSNI (350 aa)) is interaction with Dif.

The protein belongs to the Mediator complex subunit 16 family. In terms of assembly, component of the Mediator complex. Interacts with Dif.

It localises to the nucleus. Functionally, component of the Mediator complex, a coactivator involved in the regulated transcription of nearly all RNA polymerase II-dependent genes. Mediator functions as a bridge to convey information from gene-specific regulatory proteins to the basal RNA polymerase II transcription machinery. Mediator is recruited to promoters by direct interactions with regulatory proteins and serves as a scaffold for the assembly of a functional preinitiation complex with RNA polymerase II and the general transcription factors. Required for activated transcription of the MtnA, MtnB and MtnD genes. Required for transcriptional activation in response to lipopolysacchardie (LPS). The chain is Mediator of RNA polymerase II transcription subunit 16 (MED16) from Drosophila melanogaster (Fruit fly).